Here is a 267-residue protein sequence, read N- to C-terminus: 4,5-DOPA dioxygenase extradiol (267 aa).

Zn(2+)-binding residues include His9, His47, His168, and His222.

The protein belongs to the DODA-type extradiol aromatic ring-opening dioxygenase family. Requires Zn(2+) as cofactor. It depends on Fe(2+) as a cofactor. Expressed in petals. Not detected in leaves, stems and roots.

The protein resides in the cytoplasm. It carries out the reaction L-dopa + O2 = 4-(L-alanin-3-yl)-2-hydroxy-cis,cis-muconate 6-semialdehyde + H(+). It functions in the pathway pigment biosynthesis; betalain biosynthesis. Functionally, opens the cyclic ring of dihydroxy-phenylalanine (DOPA) between carbons 4 and 5, thus producing an unstable seco-DOPA that rearranges nonenzymatically to betalamic acid. Produces mainly (S)-betalamic acid. Required for the coloration of flowers. This is 4,5-DOPA dioxygenase extradiol (DOD) from Mirabilis jalapa (Garden four-o'clock).